The sequence spans 133 residues: Small ribosomal subunit protein eS24 (133 aa).

The residue at position 1 (Met1) is an N-acetylmethionine. Thr9 is modified (phosphothreonine). Lys37 participates in a covalent cross-link: Glycyl lysine isopeptide (Lys-Gly) (interchain with G-Cter in SUMO2). The segment at Ala92 to Glu133 is disordered. Residues Lys101 to Gly119 are compositionally biased toward basic residues.

The protein belongs to the eukaryotic ribosomal protein eS24 family. In terms of assembly, component of the small ribosomal subunit. Part of the small subunit (SSU) processome, composed of more than 70 proteins and the RNA chaperone small nucleolar RNA (snoRNA) U3.

It is found in the cytoplasm. The protein localises to the nucleus. Its subcellular location is the nucleolus. Its function is as follows. Component of the small ribosomal subunit. The ribosome is a large ribonucleoprotein complex responsible for the synthesis of proteins in the cell. Required for processing of pre-rRNA and maturation of 40S ribosomal subunits. Part of the small subunit (SSU) processome, first precursor of the small eukaryotic ribosomal subunit. During the assembly of the SSU processome in the nucleolus, many ribosome biogenesis factors, an RNA chaperone and ribosomal proteins associate with the nascent pre-rRNA and work in concert to generate RNA folding, modifications, rearrangements and cleavage as well as targeted degradation of pre-ribosomal RNA by the RNA exosome. The sequence is that of Small ribosomal subunit protein eS24 (RPS24) from Oryctolagus cuniculus (Rabbit).